Here is a 242-residue protein sequence, read N- to C-terminus: Phosphoribosylaminoimidazole-succinocarboxamide synthase (242 aa).

This sequence belongs to the SAICAR synthetase family.

It carries out the reaction 5-amino-1-(5-phospho-D-ribosyl)imidazole-4-carboxylate + L-aspartate + ATP = (2S)-2-[5-amino-1-(5-phospho-beta-D-ribosyl)imidazole-4-carboxamido]succinate + ADP + phosphate + 2 H(+). The protein operates within purine metabolism; IMP biosynthesis via de novo pathway; 5-amino-1-(5-phospho-D-ribosyl)imidazole-4-carboxamide from 5-amino-1-(5-phospho-D-ribosyl)imidazole-4-carboxylate: step 1/2. This Pediococcus pentosaceus (strain ATCC 25745 / CCUG 21536 / LMG 10740 / 183-1w) protein is Phosphoribosylaminoimidazole-succinocarboxamide synthase.